The following is a 410-amino-acid chain: Methylamine dehydrogenase heavy chain (410 aa).

The N-terminal stretch at Met-1–Ala-35 is a signal peptide.

It belongs to the aromatic amine dehydrogenase heavy chain family. Tetramer of two light and two heavy chains.

Its subcellular location is the periplasm. It carries out the reaction 2 oxidized [amicyanin] + methylamine + H2O = 2 reduced [amicyanin] + formaldehyde + NH4(+) + 2 H(+). Functionally, methylamine dehydrogenase carries out the oxidation of methylamine. Electrons are passed from methylamine dehydrogenase to amicyanin. This chain is Methylamine dehydrogenase heavy chain (mauB), found in Methylorubrum extorquens (strain ATCC 14718 / DSM 1338 / JCM 2805 / NCIMB 9133 / AM1) (Methylobacterium extorquens).